Consider the following 97-residue polypeptide: YcgL domain-containing protein PFL_1496 (97 aa).

The 85-residue stretch at 3-87 (RICSIYKSPR…AEDEYIEHLP (85 aa)) folds into the YcgL domain.

The sequence is that of YcgL domain-containing protein PFL_1496 from Pseudomonas fluorescens (strain ATCC BAA-477 / NRRL B-23932 / Pf-5).